Here is a 460-residue protein sequence, read N- to C-terminus: Glycine--tRNA ligase (460 aa).

Substrate-binding residues include arginine 99 and glutamate 162. ATP-binding positions include 194 to 196 (RNE), 204 to 209 (FRTREF), 281 to 282 (EL), and 325 to 328 (GVGR). Position 209–213 (209–213 (FEQME)) interacts with substrate. Substrate is bound at residue 321-325 (EPAAG).

The protein belongs to the class-II aminoacyl-tRNA synthetase family. In terms of assembly, homodimer.

Its subcellular location is the cytoplasm. It catalyses the reaction tRNA(Gly) + glycine + ATP = glycyl-tRNA(Gly) + AMP + diphosphate. Catalyzes the attachment of glycine to tRNA(Gly). This is Glycine--tRNA ligase from Streptomyces coelicolor (strain ATCC BAA-471 / A3(2) / M145).